Consider the following 90-residue polypeptide: Accessory gland-specific peptide 26Ab (90 aa).

Positions 1–21 (MNYFAVLCIFSCICFWQFSDA) are cleaved as a signal peptide.

In terms of tissue distribution, main cells of the accessory glands of males.

The protein resides in the secreted. Its subcellular location is the extracellular space. In terms of biological role, this protein is transferred from male to female during mating and may affect egglaying and behavior after mating. This chain is Accessory gland-specific peptide 26Ab (Acp26Ab), found in Drosophila simulans (Fruit fly).